Here is a 338-residue protein sequence, read N- to C-terminus: Glyceraldehyde-3-phosphate dehydrogenase (338 aa).

NAD(+) is bound by residues 11 to 12 and Gly-111; that span reads TI. A D-glyceraldehyde 3-phosphate-binding site is contributed by 140-142; the sequence is SCN. The active-site Nucleophile is Cys-141. Arg-169 provides a ligand contact to NAD(+). 195 to 196 lines the D-glyceraldehyde 3-phosphate pocket; that stretch reads HG. Residue Gln-302 participates in NAD(+) binding.

This sequence belongs to the glyceraldehyde-3-phosphate dehydrogenase family. As to quaternary structure, homotetramer.

Its subcellular location is the cytoplasm. The catalysed reaction is D-glyceraldehyde 3-phosphate + phosphate + NADP(+) = (2R)-3-phospho-glyceroyl phosphate + NADPH + H(+). It catalyses the reaction D-glyceraldehyde 3-phosphate + phosphate + NAD(+) = (2R)-3-phospho-glyceroyl phosphate + NADH + H(+). It participates in carbohydrate degradation; glycolysis; pyruvate from D-glyceraldehyde 3-phosphate: step 1/5. In Methanobacterium bryantii, this protein is Glyceraldehyde-3-phosphate dehydrogenase (gap).